Reading from the N-terminus, the 29-residue chain is U-homostoxin-Hdu1a (29 aa).

Threonine 1 carries an O-linked (GlcNAc...) threonine glycan. Cystine bridges form between cysteine 7–cysteine 19 and cysteine 10–cysteine 25.

It belongs to the sea anemone BBH family.

It localises to the secreted. The protein resides in the nematocyst. The polypeptide is U-homostoxin-Hdu1a (Homostichanthus duerdeni (Sea anemone)).